We begin with the raw amino-acid sequence, 500 residues long: L-arabinose isomerase (500 aa).

Mn(2+) is bound by residues E306, E333, H350, and H450.

It belongs to the arabinose isomerase family. Homohexamer. It depends on Mn(2+) as a cofactor.

The enzyme catalyses beta-L-arabinopyranose = L-ribulose. The protein operates within carbohydrate degradation; L-arabinose degradation via L-ribulose; D-xylulose 5-phosphate from L-arabinose (bacterial route): step 1/3. Catalyzes the conversion of L-arabinose to L-ribulose. In Klebsiella pneumoniae (strain 342), this protein is L-arabinose isomerase.